The chain runs to 199 residues: Transgelin-2 (199 aa).

Residue alanine 2 is modified to N-acetylalanine. Serine 11 carries the phosphoserine modification. N6-acetyllysine is present on residues lysine 17 and lysine 20. One can recognise a Calponin-homology (CH) domain in the interval 24-136; it reads ADLEQILIQW…RTLMNLGGLA (113 aa). Serine 163 carries the phosphoserine modification. A Glycyl lysine isopeptide (Lys-Gly) (interchain with G-Cter in SUMO2) cross-link involves residue lysine 171. A Calponin-like repeat occupies 174–199; it reads IGLQMGTNRGASQAGMTGYGMPRQIL. Threonine 180 is subject to Phosphothreonine. Omega-N-methylarginine is present on residues arginine 182 and arginine 196.

It belongs to the calponin family. In terms of tissue distribution, expressed in epididymis (at protein level).

The polypeptide is Transgelin-2 (TAGLN2) (Homo sapiens (Human)).